Reading from the N-terminus, the 284-residue chain is uncharacterized protein (284 aa).

Residues 12–32 (ILFILFVVAFCVYLVPRVAIN) traverse the membrane as a helical segment.

This sequence belongs to the serine esterase family.

It is found in the membrane. This is an uncharacterized protein from Escherichia coli (strain K12).